A 266-amino-acid polypeptide reads, in one-letter code: Small ribosomal subunit protein uS2 (266 aa).

The tract at residues 233 to 266 (AVREEEFASAPDAGKKGRQAQPKKGKRASDAAAE) is disordered. A compositionally biased stretch (basic residues) spans 248-258 (KGRQAQPKKGK).

This sequence belongs to the universal ribosomal protein uS2 family.

This Xylella fastidiosa (strain M23) protein is Small ribosomal subunit protein uS2.